The following is a 947-amino-acid chain: Bifunctional glutamine synthetase adenylyltransferase/adenylyl-removing enzyme (947 aa).

Residues 1 to 440 (MTPLSSPLSQ…VFNELIGDDE (440 aa)) are adenylyl removase. The segment at 450-947 (SEPWREVWQD…ASWRKWLVAV (498 aa)) is adenylyl transferase.

Belongs to the GlnE family. It depends on Mg(2+) as a cofactor.

It catalyses the reaction [glutamine synthetase]-O(4)-(5'-adenylyl)-L-tyrosine + phosphate = [glutamine synthetase]-L-tyrosine + ADP. The enzyme catalyses [glutamine synthetase]-L-tyrosine + ATP = [glutamine synthetase]-O(4)-(5'-adenylyl)-L-tyrosine + diphosphate. Functionally, involved in the regulation of glutamine synthetase GlnA, a key enzyme in the process to assimilate ammonia. When cellular nitrogen levels are high, the C-terminal adenylyl transferase (AT) inactivates GlnA by covalent transfer of an adenylyl group from ATP to specific tyrosine residue of GlnA, thus reducing its activity. Conversely, when nitrogen levels are low, the N-terminal adenylyl removase (AR) activates GlnA by removing the adenylyl group by phosphorolysis, increasing its activity. The regulatory region of GlnE binds the signal transduction protein PII (GlnB) which indicates the nitrogen status of the cell. The chain is Bifunctional glutamine synthetase adenylyltransferase/adenylyl-removing enzyme from Salmonella paratyphi A (strain ATCC 9150 / SARB42).